A 523-amino-acid polypeptide reads, in one-letter code: Factor arrest protein 8 (523 aa).

The stretch at 26 to 76 (TKNERDRITWELERSEMKARIAELEGENRDLKHQLNQIQSKAVSPEGEKEE) forms a coiled coil. The disordered stretch occupies residues 61-80 (NQIQSKAVSPEGEKEEKHVP). Residues 71–80 (EGEKEEKHVP) are compositionally biased toward basic and acidic residues. The residue at position 115 (S115) is a Phosphoserine. A Phosphothreonine modification is found at T132. The interval 150 to 171 (ALLDTKPNPKQGPSESPSPTKV) is disordered. Polar residues predominate over residues 160 to 171 (QGPSESPSPTKV).

In terms of assembly, component of a complex at least composed of FAR3, FAR7, FAR8, FAR10, FAR11 and VPS64.

It is found in the cytoplasm. It localises to the endoplasmic reticulum. Participates in the control of the reentry into the cell cycle following pheromone treatment. In Saccharomyces cerevisiae (strain ATCC 204508 / S288c) (Baker's yeast), this protein is Factor arrest protein 8 (FAR8).